A 222-amino-acid chain; its full sequence is 2-C-methyl-D-erythritol 4-phosphate cytidylyltransferase (222 aa).

This sequence belongs to the IspD/TarI cytidylyltransferase family. IspD subfamily.

The enzyme catalyses 2-C-methyl-D-erythritol 4-phosphate + CTP + H(+) = 4-CDP-2-C-methyl-D-erythritol + diphosphate. The protein operates within isoprenoid biosynthesis; isopentenyl diphosphate biosynthesis via DXP pathway; isopentenyl diphosphate from 1-deoxy-D-xylulose 5-phosphate: step 2/6. Functionally, catalyzes the formation of 4-diphosphocytidyl-2-C-methyl-D-erythritol from CTP and 2-C-methyl-D-erythritol 4-phosphate (MEP). The sequence is that of 2-C-methyl-D-erythritol 4-phosphate cytidylyltransferase from Thermotoga petrophila (strain ATCC BAA-488 / DSM 13995 / JCM 10881 / RKU-1).